We begin with the raw amino-acid sequence, 241 residues long: Large ribosomal subunit protein uL3 (241 aa).

Belongs to the universal ribosomal protein uL3 family. In terms of assembly, part of the 50S ribosomal subunit. Forms a cluster with proteins L14 and L19.

Functionally, one of the primary rRNA binding proteins, it binds directly near the 3'-end of the 23S rRNA, where it nucleates assembly of the 50S subunit. The protein is Large ribosomal subunit protein uL3 of Aquifex aeolicus (strain VF5).